Here is a 372-residue protein sequence, read N- to C-terminus: NAD(P)H-quinone oxidoreductase subunit 1 (372 aa).

9 helical membrane-spanning segments follow: residues 27–47 (TIWL…GVLV), 65–85 (PEYI…KLVF), 97–117 (WLFT…YLIV), 128–148 (LGIG…GLLM), 176–196 (LALA…IDIV), 204–224 (ILGW…IAAL), 249–269 (YAGM…VLSS), 308–328 (GLGL…AILL), and 351–371 (VGLV…FAFG).

Belongs to the complex I subunit 1 family. As to quaternary structure, NDH-1 is composed of at least 11 different subunits.

The protein resides in the cellular thylakoid membrane. The catalysed reaction is a plastoquinone + NADH + (n+1) H(+)(in) = a plastoquinol + NAD(+) + n H(+)(out). It catalyses the reaction a plastoquinone + NADPH + (n+1) H(+)(in) = a plastoquinol + NADP(+) + n H(+)(out). NDH-1 shuttles electrons from an unknown electron donor, via FMN and iron-sulfur (Fe-S) centers, to quinones in the respiratory and/or the photosynthetic chain. The immediate electron acceptor for the enzyme in this species is believed to be plastoquinone. Couples the redox reaction to proton translocation, and thus conserves the redox energy in a proton gradient. This Acaryochloris marina (strain MBIC 11017) protein is NAD(P)H-quinone oxidoreductase subunit 1.